Reading from the N-terminus, the 314-residue chain is MKKGINRVVLVGTGAVGCSYAYSMINQGVAEEFVLVDVNEAKAEGEAMDLSHAVPFSPSPTKVWSGSYADCKDADLVVITAGLPQKPGETRLDLVEKNTKIFKQIVRGIMDSGFDGIFLIATNPVDILTYVTWKESGLPKERVIGSGTTLDSARFRYMLGDYLDVDPRNVHAYIVGEHGDTELPVWSHATIGVQKLETILANNEQYKQEDLDKIFENVRDAAYHIIERKGATYYGIGMSLLRVTKAILNNENSVLTVSAYLEGQYGEKDAYVGVPAVINREGVREIVELELNEEEKAKFAHSVKVLKETMAPVL.

NAD(+) contacts are provided by residues valine 16, aspartate 37, lysine 42, tyrosine 68, and 82–83 (GL). Residues glutamine 85, arginine 91, and 123–126 (NPVD) contribute to the substrate site. Residues 121–123 (ATN) and serine 146 each bind NAD(+). 151–154 (DSAR) is a substrate binding site. Residues arginine 156 and histidine 171 each contribute to the beta-D-fructose 1,6-bisphosphate site. Histidine 178 acts as the Proton acceptor in catalysis. At tyrosine 223 the chain carries Phosphotyrosine. Position 232 (threonine 232) interacts with substrate.

This sequence belongs to the LDH/MDH superfamily. LDH family. In terms of assembly, homotetramer.

The protein resides in the cytoplasm. The enzyme catalyses (S)-lactate + NAD(+) = pyruvate + NADH + H(+). Its pathway is fermentation; pyruvate fermentation to lactate; (S)-lactate from pyruvate: step 1/1. Allosterically activated by fructose 1,6-bisphosphate (FBP). Functionally, catalyzes the conversion of lactate to pyruvate. The polypeptide is L-lactate dehydrogenase 2 (Bacillus anthracis).